Reading from the N-terminus, the 57-residue chain is Peptide BmKa1 (57 aa).

A signal peptide spans 1 to 22; sequence MKPRVFFLLFLLVAAMIETGES. 2 stretches are compositionally biased toward acidic residues: residues 20–29 and 45–57; these read GESEENEEGS and VDNE…GDSD. The tract at residues 20–57 is disordered; that stretch reads GESEENEEGSNESGKSTEAKNTDASVDNEDSDIDGDSD.

This sequence belongs to the non-disulfide-bridged peptide (NDBP) superfamily. Expressed by the venom gland.

The protein resides in the secreted. This chain is Peptide BmKa1, found in Olivierus martensii (Manchurian scorpion).